A 454-amino-acid chain; its full sequence is tRNA-2-methylthio-N(6)-dimethylallyladenosine synthase (454 aa).

The MTTase N-terminal domain occupies 6–122; sequence RHYHITTFGC…LKDLLESVFD (117 aa). The [4Fe-4S] cluster site is built by C15, C51, C85, C157, C161, and C164. Residues 143-381 enclose the Radical SAM core domain; sequence RDSKVTAWVN…HLGNLKVAER (239 aa). The region spanning 383–447 is the TRAM domain; that stretch reads QRYFGRIEEV…PFSLTGQPVE (65 aa).

The protein belongs to the methylthiotransferase family. MiaB subfamily. As to quaternary structure, monomer. [4Fe-4S] cluster serves as cofactor.

The protein localises to the cytoplasm. The enzyme catalyses N(6)-dimethylallyladenosine(37) in tRNA + (sulfur carrier)-SH + AH2 + 2 S-adenosyl-L-methionine = 2-methylsulfanyl-N(6)-dimethylallyladenosine(37) in tRNA + (sulfur carrier)-H + 5'-deoxyadenosine + L-methionine + A + S-adenosyl-L-homocysteine + 2 H(+). Functionally, catalyzes the methylthiolation of N6-(dimethylallyl)adenosine (i(6)A), leading to the formation of 2-methylthio-N6-(dimethylallyl)adenosine (ms(2)i(6)A) at position 37 in tRNAs that read codons beginning with uridine. The polypeptide is tRNA-2-methylthio-N(6)-dimethylallyladenosine synthase (Nostoc punctiforme (strain ATCC 29133 / PCC 73102)).